The chain runs to 642 residues: Zinc finger protein 14 (642 aa).

A KRAB domain is found at 4 to 76; it reads VSFEDVAVNF…MVERLCESRK (73 aa). Positions 77 to 99 are disordered; the sequence is GSKCGETTSQMPNVNINKETSTG. Residues 81–99 show a composition bias toward polar residues; that stretch reads GETTSQMPNVNINKETSTG. Residues 103–125 form a C2H2-type 1 zinc finger; that stretch reads HECSFCGKDFMHHSSLNRHMRSH. The C2H2-type 2; degenerate zinc-finger motif lies at 141-163; it reads CKRKAVGKTFSYRHCVRKHERTH. The C2H2-type 3 zinc finger occupies 169–191; that stretch reads YECKQCGKAFIYYQPFQRHERIH. The segment at 197 to 217 adopts a C2H2-type 4; atypical zinc-finger fold; sequence YECKQCGKTFIYYQSFQKHAH. 15 C2H2-type zinc fingers span residues 223–245, 251–273, 279–301, 307–329, 335–357, 363–385, 391–413, 419–441, 447–469, 475–497, 503–525, 531–553, 559–581, 587–609, and 615–637; these read YECK…ERTH, YKCK…KRTH, YECK…VITH, YKCK…ERTH, YECK…ETTH, YECK…ERSH, YECK…EKIH, FECK…ERTH, YQCK…ERTH, and YRCK…ERSH.

Belongs to the krueppel C2H2-type zinc-finger protein family.

The protein resides in the nucleus. Functionally, may be involved in transcriptional regulation. The chain is Zinc finger protein 14 (ZNF14) from Macaca fascicularis (Crab-eating macaque).